Reading from the N-terminus, the 396-residue chain is Proteasome-activating nucleotidase (396 aa).

The stretch at 16–57 (VTYLKRRIRQLELQVRMLEADKERLERELSRLRSEMSRLRQP) forms a coiled coil. Residues 181–186 (GCGKTL) and His320 each bind ATP. The interval 394 to 396 (IYG) is docks into pockets in the proteasome alpha-ring to cause gate opening.

The protein belongs to the AAA ATPase family. Homohexamer. The hexameric complex has a two-ring architecture resembling a top hat that caps the 20S proteasome core at one or both ends. Upon ATP-binding, the C-terminus of PAN interacts with the alpha-rings of the proteasome core by binding to the intersubunit pockets.

Its subcellular location is the cytoplasm. Its function is as follows. ATPase which is responsible for recognizing, binding, unfolding and translocation of substrate proteins into the archaeal 20S proteasome core particle. Is essential for opening the gate of the 20S proteasome via an interaction with its C-terminus, thereby allowing substrate entry and access to the site of proteolysis. Thus, the C-termini of the proteasomal ATPase function like a 'key in a lock' to induce gate opening and therefore regulate proteolysis. Unfolding activity requires energy from ATP hydrolysis, whereas ATP binding alone promotes ATPase-20S proteasome association which triggers gate opening, and supports translocation of unfolded substrates. The protein is Proteasome-activating nucleotidase of Pyrococcus furiosus (strain ATCC 43587 / DSM 3638 / JCM 8422 / Vc1).